The primary structure comprises 395 residues: MAKEKFDRSKSHVNIGTIGHVDHGKTTLTAAIATVLSKHGGGEAQSYDSIDNAPEEKERGITINTSHIEYETETRHYAHVDCPGHADYVKNMITGAAQMDGAILVVSAADGPMPQTREHILLSRNVGVPYIVVFLNKMDMVDDEELLELVEMEVRDLLSEYDFPGDDVPVIAGSALKALEGDESYEEKILELMAAVDEYIPTPERDTDKPFMMPVEDVFSITGRGTVATGRVERGEVRVGDEVEIVGIKDETSKTTVTGVEMFRKLLDYAEAGDNIGALLRGVAREDIERGQVLAKPATITPHTKFKAEVYVLSKEEGGRHTPFFTNYRPQFYFRTTDVTGVVELPEGTEMVMPGDNVAMDVELIHPIAIEDGTRFSIREGGRTVGSGVVTEIVK.

The tr-type G domain occupies 10–204 (KSHVNIGTIG…AVDEYIPTPE (195 aa)). The segment at 19–26 (GHVDHGKT) is G1. 19 to 26 (GHVDHGKT) provides a ligand contact to GTP. A Mg(2+)-binding site is contributed by T26. Residues 60 to 64 (GITIN) are G2. The tract at residues 81 to 84 (DCPG) is G3. GTP contacts are provided by residues 81–85 (DCPGH) and 136–139 (NKMD). The tract at residues 136–139 (NKMD) is G4. The interval 174-176 (SAL) is G5.

It belongs to the TRAFAC class translation factor GTPase superfamily. Classic translation factor GTPase family. EF-Tu/EF-1A subfamily. In terms of assembly, monomer.

It localises to the cytoplasm. The catalysed reaction is GTP + H2O = GDP + phosphate + H(+). Its function is as follows. GTP hydrolase that promotes the GTP-dependent binding of aminoacyl-tRNA to the A-site of ribosomes during protein biosynthesis. This chain is Elongation factor Tu, found in Enterococcus faecalis (strain ATCC 700802 / V583).